A 414-amino-acid polypeptide reads, in one-letter code: Serine/threonine transporter SstT (414 aa).

Transmembrane regions (helical) follow at residues 16–36, 46–66, 84–104, 143–163, 180–200, 219–239, 300–320, and 332–352; these read GSLV…AWVS, LGTL…LMLV, ILFL…VFSF, ALLN…GFAL, AVTF…FGLV, LVVL…LLVF, MAGA…TLGV, and VVAS…LLLI.

It belongs to the dicarboxylate/amino acid:cation symporter (DAACS) (TC 2.A.23) family.

The protein resides in the cell inner membrane. The enzyme catalyses L-serine(in) + Na(+)(in) = L-serine(out) + Na(+)(out). The catalysed reaction is L-threonine(in) + Na(+)(in) = L-threonine(out) + Na(+)(out). In terms of biological role, involved in the import of serine and threonine into the cell, with the concomitant import of sodium (symport system). The protein is Serine/threonine transporter SstT of Salmonella arizonae (strain ATCC BAA-731 / CDC346-86 / RSK2980).